We begin with the raw amino-acid sequence, 267 residues long: Acyl-[acyl-carrier-protein]--UDP-N-acetylglucosamine O-acyltransferase (267 aa).

The protein belongs to the transferase hexapeptide repeat family. LpxA subfamily. In terms of assembly, homotrimer.

Its subcellular location is the cytoplasm. It catalyses the reaction a (3R)-hydroxyacyl-[ACP] + UDP-N-acetyl-alpha-D-glucosamine = a UDP-3-O-[(3R)-3-hydroxyacyl]-N-acetyl-alpha-D-glucosamine + holo-[ACP]. Its pathway is glycolipid biosynthesis; lipid IV(A) biosynthesis; lipid IV(A) from (3R)-3-hydroxytetradecanoyl-[acyl-carrier-protein] and UDP-N-acetyl-alpha-D-glucosamine: step 1/6. In terms of biological role, involved in the biosynthesis of lipid A, a phosphorylated glycolipid that anchors the lipopolysaccharide to the outer membrane of the cell. The chain is Acyl-[acyl-carrier-protein]--UDP-N-acetylglucosamine O-acyltransferase from Hamiltonella defensa subsp. Acyrthosiphon pisum (strain 5AT).